Reading from the N-terminus, the 1067-residue chain is Hemoglobin and hemoglobin-haptoglobin-binding protein B (1067 aa).

A signal peptide spans 1-24 (MTNFKFSLLACSIAFALNASTAYA). 6 tandem repeats follow at residues 26–29 (QPTN), 30–33 (QPTN), 34–37 (QPTN), 38–41 (QPTN), 42–45 (QPTN), and 46–49 (QPTN). Residues 26-49 (QPTNQPTNQPTNQPTNQPTNQPTN) form a 6 X 4 AA tandem repeats of Q-P-T-N region. The segment covering 26-51 (QPTNQPTNQPTNQPTNQPTNQPTNQN) has biased composition (low complexity). The disordered stretch occupies residues 26–53 (QPTNQPTNQPTNQPTNQPTNQPTNQNSN). The TonB box signature appears at 59-66 (EQINVSGS). The TBDR plug domain maps to 71-196 (NIKEKKVGET…LGGSVIFETK (126 aa)). Positions 204-1067 (DKDYYLSYKR…NYRMSVQFEF (864 aa)) constitute a TBDR beta-barrel domain. Positions 1050–1067 (NRFYAPGRNYRMSVQFEF) match the TonB C-terminal box motif.

It belongs to the TonB-dependent receptor family. Hemoglobin/haptoglobin binding protein subfamily.

It is found in the cell outer membrane. In terms of biological role, acts as a receptor for hemoglobin or the hemoglobin/haptoglobin complex of the human host and is required for heme uptake. In Haemophilus influenzae, this protein is Hemoglobin and hemoglobin-haptoglobin-binding protein B (hgbB).